Here is an 880-residue protein sequence, read N- to C-terminus: Valine--tRNA ligase (880 aa).

The short motif at 49–59 is the 'HIGH' region element; that stretch reads PNVTGKLHLGH. The 'KMSKS' region signature appears at 525–529; sequence KMSKS. Lysine 528 contacts ATP. A coiled-coil region spans residues 809–880; it reads LEGLINIEEE…VKARLAELKR (72 aa).

This sequence belongs to the class-I aminoacyl-tRNA synthetase family. ValS type 1 subfamily. As to quaternary structure, monomer.

It is found in the cytoplasm. It carries out the reaction tRNA(Val) + L-valine + ATP = L-valyl-tRNA(Val) + AMP + diphosphate. Its function is as follows. Catalyzes the attachment of valine to tRNA(Val). As ValRS can inadvertently accommodate and process structurally similar amino acids such as threonine, to avoid such errors, it has a 'posttransfer' editing activity that hydrolyzes mischarged Thr-tRNA(Val) in a tRNA-dependent manner. This chain is Valine--tRNA ligase, found in Geobacillus kaustophilus (strain HTA426).